The chain runs to 651 residues: Sodium/potassium/calcium exchanger 2 (651 aa).

Residues Met-1–Arg-38 lie on the Cytoplasmic side of the membrane. A helical transmembrane segment spans residues Ile-39 to Phe-59. The Extracellular portion of the chain corresponds to Phe-60 to Lys-134. A disordered region spans residues Gln-92–Pro-123. Residues Asn-93–Ser-103 show a composition bias toward polar residues. The segment covering Met-104 to Tyr-122 has biased composition (basic and acidic residues). The N-linked (GlcNAc...) asparagine glycan is linked to Asn-112. The helical transmembrane segment at Gly-135 to Cys-155 threads the bilayer. Over Asp-156–Ala-179 the chain is Cytoplasmic. The stretch at Val-176–Phe-216 is one Alpha-1 repeat. Residues Thr-180–Ile-200 form a helical membrane-spanning segment. The Extracellular segment spans residues Ser-201 to Gly-206. A helical transmembrane segment spans residues Ile-207–Leu-227. Over Phe-228–Ser-245 the chain is Cytoplasmic. The helical transmembrane segment at Phe-246–Trp-266 threads the bilayer. Over Glu-267–Lys-459 the chain is Extracellular. Residues Ala-304–Gln-322 are compositionally biased toward basic and acidic residues. The disordered stretch occupies residues Ala-304–Ser-338. A compositionally biased stretch (polar residues) spans Thr-323–Ser-338. Residues Gln-460–Val-480 traverse the membrane as a helical segment. Residues Arg-481 to Lys-487 are Cytoplasmic-facing. The helical transmembrane segment at Phe-488–Val-508 threads the bilayer. Residues Trp-509–Glu-523 lie on the Extracellular side of the membrane. A helical transmembrane segment spans residues Ile-524–Ile-544. One copy of the Alpha-2 repeat lies at Ala-531 to Asn-562. Over Val-545–Asn-562 the chain is Cytoplasmic. Residues Ile-563–Phe-583 traverse the membrane as a helical segment. Residues Ser-584–Gly-592 lie on the Extracellular side of the membrane. The helical transmembrane segment at Leu-593–Phe-613 threads the bilayer. Residues Cys-614–Lys-620 are Cytoplasmic-facing. A helical membrane pass occupies residues Phe-621–Glu-641. Topologically, residues Asp-642–Ile-651 are extracellular.

The protein belongs to the Ca(2+):cation antiporter (CaCA) (TC 2.A.19) family. SLC24A subfamily. As to expression, retinal cones. Found in the cone inner segment layer and in a subpopulation of ganglion cells.

It localises to the cell membrane. It catalyses the reaction Ca(2+)(out) + K(+)(out) + 4 Na(+)(in) = Ca(2+)(in) + K(+)(in) + 4 Na(+)(out). Its function is as follows. Calcium, potassium:sodium antiporter that transports 1 Ca(2+) and 1 K(+) in exchange for 4 Na(+). Required for learming and memory by regulating neuronal Ca(2+), which is essential for the development of synaptic plasticity. The protein is Sodium/potassium/calcium exchanger 2 (SLC24A2) of Gallus gallus (Chicken).